A 495-amino-acid chain; its full sequence is Probable aminotransferase ACS12 (495 aa).

The residue at position 334 (lysine 334) is an N6-(pyridoxal phosphate)lysine.

Belongs to the class-I pyridoxal-phosphate-dependent aminotransferase family. Homodimer. It depends on pyridoxal 5'-phosphate as a cofactor. In terms of tissue distribution, expressed in roots. Expressed at low level in leaves, stems, flowers and siliques.

Functionally, probable aminotransferase. Does not have 1-aminocyclopropane-1-carboxylate synthase (ACS) activity, suggesting that it is not involved in ethylene biosynthesis. This Arabidopsis thaliana (Mouse-ear cress) protein is Probable aminotransferase ACS12 (ACS12).